A 295-amino-acid chain; its full sequence is Sperm acrosome membrane-associated protein 1 (295 aa).

The N-terminal stretch at 1-29 (MSPGGAGCSAGLLLTVGWLLLAGLQSTCG) is a signal peptide. Residues 30 to 220 (INVTAVQDPS…SRPDTDAVLV (191 aa)) are Extracellular-facing. The interval 39–71 (SLVSEGENEGEEEAENDSEVENEPQAEAEQDVS) is disordered. Residues 44-68 (GENEGEEEAENDSEVENEPQAEAEQ) are compositionally biased toward acidic residues. A glycan (N-linked (GlcNAc...) asparagine) is linked at asparagine 72. Residues 221–241 (FVLTIGVIICIFVIFVLIFII) form a helical membrane-spanning segment. At 242 to 295 (VNWATVKDFWASKASTTEIQSELSSMKYKDSTSLDQSPTEIPGHEDDALSEWNE) the chain is on the cytoplasmic side. Residue serine 256 is modified to Phosphoserine. Residues 263–295 (ELSSMKYKDSTSLDQSPTEIPGHEDDALSEWNE) form a disordered region. The residue at position 269 (tyrosine 269) is a Phosphotyrosine. Phosphoserine occurs at positions 278 and 291.

Interacts with CYLC1; the interaction may be relevant for proper acrosome attachment to the nuclear envelope. In terms of processing, N-glycosylated. As to expression, detected in spermatozoa (at protein level).

It is found in the cytoplasmic vesicle. It localises to the secretory vesicle. Its subcellular location is the acrosome inner membrane. Functionally, plays a role in acrosome expansion and establishment of normal sperm morphology during spermatogenesis. Important for male fertility. The chain is Sperm acrosome membrane-associated protein 1 from Sus scrofa (Pig).